Consider the following 364-residue polypeptide: Ribosomal RNA large subunit methyltransferase F (364 aa).

A compositionally biased stretch (low complexity) spans Met-1–Ala-17. The disordered stretch occupies residues Met-1–Leu-53. The span at Thr-39–Leu-53 shows a compositional bias: basic residues.

The protein belongs to the methyltransferase superfamily. METTL16/RlmF family.

It is found in the cytoplasm. It catalyses the reaction adenosine(1618) in 23S rRNA + S-adenosyl-L-methionine = N(6)-methyladenosine(1618) in 23S rRNA + S-adenosyl-L-homocysteine + H(+). In terms of biological role, specifically methylates the adenine in position 1618 of 23S rRNA. In Shewanella sp. (strain MR-4), this protein is Ribosomal RNA large subunit methyltransferase F.